The chain runs to 716 residues: Segment polarity protein dishevelled homolog DVL-3 (716 aa).

Residues 1 to 82 (MGETKIIYHL…RVVSWLVSAE (82 aa)) enclose the DIX domain. R27 carries the omega-N-methylarginine modification. A phosphoserine mark is found at S48 and S125. The interval 85–235 (HPEPAPFCAD…VSRIERSSSF (151 aa)) is disordered. The segment covering 142-156 (QRERPRRRDGPEHAA) has biased composition (basic and acidic residues). Positions 175–190 (SSSTLMSSELETTSFF) are enriched in low complexity. S192 bears the Phosphoserine mark. Residues 199–212 (SRFSSSTEQSSASR) show a composition bias toward low complexity. Residue R212 is modified to Omega-N-methylarginine. Residues 213–226 (LMRRHKRRRRKQKV) show a composition bias toward basic residues. The PDZ domain occupies 249–321 (TVTLNMEKYN…NDDAVRVLRE (73 aa)). An Asymmetric dimethylarginine; by PRMT1; alternate modification is found at R271. A symmetric dimethylarginine; by PRMT7; alternate mark is found at R271 and R342. An Omega-N-methylarginine; alternate modification is found at R342. The residue at position 346 (T346) is a Phosphothreonine. Residues 422 to 496 (PESGLEVRDR…SEQCYYIFGD (75 aa)) form the DEP domain. Positions 546 to 691 (PYNPHPGFPE…PPGRDLASVP (146 aa)) are disordered. A compositionally biased stretch (low complexity) spans 565-581 (ASSQHSEGSRSSGSNRS). Basic and acidic residues-rich tracts occupy residues 582–595 (GSDR…KAGD) and 604–622 (ESDH…RAPS). The residue at position 614 (R614) is a Symmetric dimethylarginine; by PRMT7. Pro residues-rich tracts occupy residues 653–663 (YGPPGVPPLYG) and 670–682 (TPPP…PGAP). Phosphoserine is present on S697. The residue at position 698 (R698) is an Omega-N-methylarginine; alternate. R698 carries the post-translational modification Dimethylated arginine; alternate. S700 is subject to Phosphoserine.

The protein belongs to the DSH family. Interacts (via the PDZ domain) with the C-terminal regions of VANGL1 and VANGL2. Interacts (via the region containing both the PDZ and DEP domains) with LRRFIP2; the DIX domain may inhibit this interaction. Interacts with CYLD. Interacts with CEP164 and DAB2. Interacts with DCDC2. Interacts with FOXK1 and FOXK2. Interacts with DAAM2. In terms of processing, ubiquitinated. Deubiquitinated by CYLD, which acts on 'Lys-63'-linked ubiquitin chains. Phosphorylated by CSNK1D. Post-translationally, arginine methylation may function as a switch in regulation of function in Wnt signaling. As to expression, ubiquitous.

It localises to the cytoplasm. Its function is as follows. Involved in the signal transduction pathway mediated by multiple Wnt genes. This Mus musculus (Mouse) protein is Segment polarity protein dishevelled homolog DVL-3 (Dvl3).